Here is a 226-residue protein sequence, read N- to C-terminus: Phosphoribosylformylglycinamidine synthase subunit PurQ (226 aa).

Residues 2-225 (RFGIVVFPGS…MHYLEGGKNN (224 aa)) form the Glutamine amidotransferase type-1 domain. Residue C86 is the Nucleophile of the active site. Residues H194 and E196 contribute to the active site.

Part of the FGAM synthase complex composed of 1 PurL, 1 PurQ and 2 PurS subunits.

Its subcellular location is the cytoplasm. The catalysed reaction is N(2)-formyl-N(1)-(5-phospho-beta-D-ribosyl)glycinamide + L-glutamine + ATP + H2O = 2-formamido-N(1)-(5-O-phospho-beta-D-ribosyl)acetamidine + L-glutamate + ADP + phosphate + H(+). It catalyses the reaction L-glutamine + H2O = L-glutamate + NH4(+). Its pathway is purine metabolism; IMP biosynthesis via de novo pathway; 5-amino-1-(5-phospho-D-ribosyl)imidazole from N(2)-formyl-N(1)-(5-phospho-D-ribosyl)glycinamide: step 1/2. Functionally, part of the phosphoribosylformylglycinamidine synthase complex involved in the purines biosynthetic pathway. Catalyzes the ATP-dependent conversion of formylglycinamide ribonucleotide (FGAR) and glutamine to yield formylglycinamidine ribonucleotide (FGAM) and glutamate. The FGAM synthase complex is composed of three subunits. PurQ produces an ammonia molecule by converting glutamine to glutamate. PurL transfers the ammonia molecule to FGAR to form FGAM in an ATP-dependent manner. PurS interacts with PurQ and PurL and is thought to assist in the transfer of the ammonia molecule from PurQ to PurL. The sequence is that of Phosphoribosylformylglycinamidine synthase subunit PurQ from Alkaliphilus metalliredigens (strain QYMF).